A 4074-amino-acid chain; its full sequence is Fibrocystin (4074 aa).

The N-terminal stretch at 1–22 (MIVWLISLMSIEILLLAGPALS) is a signal peptide. 2 N-linked (GlcNAc...) asparagine glycosylation sites follow: Asn54 and Asn224. An IPT/TIG 1 domain is found at 258–310 (EILSVFPETGSLGGKTDIIITGDFFDNPALVTIAGVPCDIRHMSPRKIECTTR). The PA14 domain occupies 323–483 (AGNRGLLFEV…TWLNPDVVST (161 aa)). Asn355, Asn385, Asn518, Asn527, Asn640, Asn710, Asn741, Asn822, Asn829, Asn868, Asn953, Asn966, Asn976, Asn1006, Asn1059, Asn1083, Asn1115, Asn1134, Asn1233, Asn1240, Asn1274, Asn1284, Asn1308, Asn1319, Asn1342, Asn1373, Asn1445, Asn1456, Asn1471, Asn1490, Asn1528, Asn1560, Asn1578, Asn1598, Asn1627, Asn1694, Asn1760, Asn1775, Asn1789, Asn1875, Asn1915, Asn1941, Asn1955, Asn2030, Asn2111, and Asn2140 each carry an N-linked (GlcNAc...) asparagine glycan. The 57-residue stretch at 944 to 1000 (SLLIYIFGINFSGDPQALEIMVNKTNCKVIFSNQTNVICQTDLLPVGMHRLFMVVRP) folds into the IPT/TIG 2 domain. IPT/TIG domains are found at residues 1018-1101 (PRLD…AFTY), 1107-1186 (PVIT…RSPG), and 1199-1274 (SIEP…WAGN). An IPT/TIG 6 domain is found at 1385-1464 (PWIMAISPTH…LNVTVIVNGL (80 aa)). The 69-residue stretch at 1573–1641 (HYFPKNFSIH…LVIEVDGLSY (69 aa)) folds into the IPT/TIG 7 domain. Positions 1928 to 2049 (HSWFPERVPQ…PEVTFTHLQA (122 aa)) constitute a G8 1 domain. 5 PbH1 repeats span residues 2245-2267 (TLGLKVDSNIFYNILGHALLVGT), 2288-2322 (EQGNIIRNNVIISISGTEGLSSPEMLTPSGIYILN), 2351-2373 (APLLSFTQNIAHSCTRYGLFIYP), 2383-2404 (RGPTLFQNFTVWGSAGGARISR), and 2405-2427 (SSNLHLKNFQVYSCRDFGIDILE). Asn2390 carries N-linked (GlcNAc...) asparagine glycosylation. N-linked (GlcNAc...) asparagine glycans are attached at residues Asn2431, Asn2467, Asn2531, Asn2549, Asn2579, Asn2591, Asn2749, Asn2764, Asn2972, and Asn3004. Residues 2460 to 2483 (RWELIISNTTFVNFDLTDCVSIRT) form a PbH1 6 repeat. The region spanning 2743–2869 (EGWGGHNHTI…PKKSWTRLAA (127 aa)) is the G8 2 domain. One copy of the PbH1 7 repeat lies at 3029–3051 (SHGIILNDNIVFGTVGHGIDLEG). N-linked (GlcNAc...) asparagine glycosylation is present at Asn3053. Residues 3082 to 3104 (AKDINLYGNVVAGSERIGFHIQG) form a PbH1 8 repeat. Residues Asn3136, Asn3165, Asn3221, Asn3484, Asn3702, Asn3721, and Asn3833 are each glycosylated (N-linked (GlcNAc...) asparagine). Residues 3158–3183 (ENSVEIENITLVDNSIGLLATVYVSS) form a PbH1 9 repeat. A helical membrane pass occupies residues 3854–3874 (IILAVSLCSVASWLALCCLVC). The segment at 3871–3888 (CLVCCWFRKSKSRKIKSE) is ciliary targeting sequence (CST). Disordered regions lie at residues 3896–3919 (NDQKSHIHMSSKHPRSQETKKEDT), 3943–3965 (NGVSRRKVSRRAVREEGSSREED), and 4031–4074 (LQGQ…QEQL). 2 stretches are compositionally biased toward basic and acidic residues: residues 3910–3919 (RSQETKKEDT) and 3954–3965 (AVREEGSSREED). The tract at residues 3947-3976 (RRKVSRRAVREEGSSREEDVVPAPRIISIT) is nuclear localization signal (NLS).

As to quaternary structure, interacts with CAMLG. Interacts with PKD2. Interacts (via CST) with ARF4; this interaction allows an efficient PKHD1 trafficking to the cilium. Interacts (via CST) with RAB8A; this interaction controls trafficking through the endomembrane systeme and to the cilium. Interacts (via CST) with TULP3; this interaction allows PKHD1 trafficking to the cilium. In terms of processing, palmitoylated. Palmitoylation facilitates the trafficking to the cilia and membrane targeting. Post-translationally, N-glycosylated. Several proteolytic cleavages occur within the extracellular domain, whereas at least one cleavage occurs within the cytoplasmic domain. Cleaved by a probable proprotein convertase which produces an extracellular domain (polyductin extracellular domain, (PECD)) and a C-terminal fragment (polyductin transmembrane fragment (PTM)) which are tethered together by disulfide bonds. This extracellular domain (PECD) is then shed from the primary cilium by activation of a member of the ADAM metalloproteinase disintegrins family, resulting in concomitant release of an intra-cellular C-terminal fragment (ICD) via a gamma-secretase-dependent process. The proteolytic cleavage of the C-terminal intracellular fragment (ICD) is controlled by cytosolic calcium concentration and activation of PKC.

The protein resides in the cell membrane. Its subcellular location is the cytoplasm. It is found in the apical cell membrane. The protein localises to the cytoskeleton. It localises to the cilium basal body. The protein resides in the cell projection. Its subcellular location is the cilium. It is found in the spindle. The protein localises to the chromosome. It localises to the centromere. The protein resides in the nucleus. Its subcellular location is the secreted. It is found in the extracellular exosome. The protein localises to the endoplasmic reticulum. It localises to the golgi apparatus. In terms of biological role, promotes ciliogenesis in renal epithelial cells and therefore participates in the tubules formation and/ or ensures the maintenance of the architecture of the lumen of the kidney. Has an impact on cellular symmetry by ensuring correct bipolar cell division through the regulation of centrosome duplication and mitotic spindle assembly and by maintaining oriented cell division (OCD) during tubular elongation through planar cell polarity (PCP) pathway. During epithelial cell morphogenesis, it also regulates cell-cell and cell-matrix adhesion and participates in cell motility. Promotes cell-cell contact through the positive regulation of PTK2 kinase activity leading to either positive regulation of epithelial cell proliferation through the HRAS/RAF1 pathways, or negative regulation of apoptosis through the PDK1/AKT1 pathway. May act in collecting-duct and biliary differentiation. May participate in the regulation of the cholangiocytes proliferation and the CCN2 production in an CXCL8-dependent manner. The polypeptide is Fibrocystin (Canis lupus familiaris (Dog)).